A 79-amino-acid chain; its full sequence is Exodeoxyribonuclease 7 small subunit (79 aa).

The protein belongs to the XseB family. In terms of assembly, heterooligomer composed of large and small subunits.

The protein localises to the cytoplasm. It catalyses the reaction Exonucleolytic cleavage in either 5'- to 3'- or 3'- to 5'-direction to yield nucleoside 5'-phosphates.. Its function is as follows. Bidirectionally degrades single-stranded DNA into large acid-insoluble oligonucleotides, which are then degraded further into small acid-soluble oligonucleotides. In Geobacillus kaustophilus (strain HTA426), this protein is Exodeoxyribonuclease 7 small subunit.